The following is a 193-amino-acid chain: Acyl carrier protein phosphodiesterase (193 aa).

Belongs to the AcpH family.

It catalyses the reaction holo-[ACP] + H2O = apo-[ACP] + (R)-4'-phosphopantetheine + H(+). In terms of biological role, converts holo-ACP to apo-ACP by hydrolytic cleavage of the phosphopantetheine prosthetic group from ACP. This is Acyl carrier protein phosphodiesterase from Enterobacter sp. (strain 638).